We begin with the raw amino-acid sequence, 490 residues long: Bifunctional protein HldE (490 aa).

Residues 1-330 form a ribokinase region; that stretch reads MSRFDTLLQS…RKILPHASLA (330 aa). 205-208 is an ATP binding site; that stretch reads NRKE. D275 is a catalytic residue. Positions 358–490 are cytidylyltransferase; sequence FTNGCFDILH…LVEKAREGTT (133 aa).

This sequence in the N-terminal section; belongs to the carbohydrate kinase PfkB family. In the C-terminal section; belongs to the cytidylyltransferase family. As to quaternary structure, homodimer.

The catalysed reaction is D-glycero-beta-D-manno-heptose 7-phosphate + ATP = D-glycero-beta-D-manno-heptose 1,7-bisphosphate + ADP + H(+). It catalyses the reaction D-glycero-beta-D-manno-heptose 1-phosphate + ATP + H(+) = ADP-D-glycero-beta-D-manno-heptose + diphosphate. Its pathway is nucleotide-sugar biosynthesis; ADP-L-glycero-beta-D-manno-heptose biosynthesis; ADP-L-glycero-beta-D-manno-heptose from D-glycero-beta-D-manno-heptose 7-phosphate: step 1/4. The protein operates within nucleotide-sugar biosynthesis; ADP-L-glycero-beta-D-manno-heptose biosynthesis; ADP-L-glycero-beta-D-manno-heptose from D-glycero-beta-D-manno-heptose 7-phosphate: step 3/4. Catalyzes the phosphorylation of D-glycero-D-manno-heptose 7-phosphate at the C-1 position to selectively form D-glycero-beta-D-manno-heptose-1,7-bisphosphate. Its function is as follows. Catalyzes the ADP transfer from ATP to D-glycero-beta-D-manno-heptose 1-phosphate, yielding ADP-D-glycero-beta-D-manno-heptose. In Rhodopseudomonas palustris (strain BisB5), this protein is Bifunctional protein HldE.